A 134-amino-acid chain; its full sequence is Ribosome-binding factor A (134 aa).

It belongs to the RbfA family. As to quaternary structure, monomer. Binds 30S ribosomal subunits, but not 50S ribosomal subunits or 70S ribosomes.

The protein localises to the cytoplasm. Its function is as follows. One of several proteins that assist in the late maturation steps of the functional core of the 30S ribosomal subunit. Associates with free 30S ribosomal subunits (but not with 30S subunits that are part of 70S ribosomes or polysomes). Required for efficient processing of 16S rRNA. May interact with the 5'-terminal helix region of 16S rRNA. The chain is Ribosome-binding factor A from Bdellovibrio bacteriovorus (strain ATCC 15356 / DSM 50701 / NCIMB 9529 / HD100).